Reading from the N-terminus, the 317-residue chain is Serpentine receptor class delta-46 (317 aa).

Transmembrane regions (helical) follow at residues 9-29 (FYIIFFLIVFPTQLLLLYVII), 42-62 (IFLCNCSCQIFSMITLVLLQA), 91-111 (YVLCEGTVLMSSILIFITMYV), 129-149 (VIILSLSPLFITMSAEAYLTI), 185-205 (QIVFCTICGFFVIFPLIMFCL), 239-259 (AFLPLFCVCPIFICSFVALIT), and 269-289 (FVSVVLLLPTFFEPYITFYTV).

Belongs to the nematode receptor-like protein srd family.

It is found in the membrane. This is Serpentine receptor class delta-46 (srd-46) from Caenorhabditis elegans.